Here is a 299-residue protein sequence, read N- to C-terminus: CCR4-NOT transcription complex subunit 9 (299 aa).

Position 1 is an N-acetylmethionine (Met-1).

The protein belongs to the CNOT9 family. Homodimer. Component of the CCR4-NOT complex; distinct complexes seem to exist that differ in the participation of probably mutually exclusive catalytic subunits. Interacts with MYB, ATF2, RARA, RARB, RARG, RXRA, RXRB and RXRG. Identified in a complex with ATF2 bound to target DNA. Interacts with NANOS2. Directly interacts with ZNF335.

It is found in the nucleus. Its subcellular location is the cytoplasm. The protein localises to the P-body. Its function is as follows. Component of the CCR4-NOT complex which is one of the major cellular mRNA deadenylases and is linked to various cellular processes including bulk mRNA degradation, miRNA-mediated repression, translational repression during translational initiation and general transcription regulation. Additional complex functions may be a consequence of its influence on mRNA expression. Involved in down-regulation of MYB- and JUN-dependent transcription. Enhances ligand-dependent transcriptional activity of nuclear hormone receptors. May play a role in cell differentiation. The polypeptide is CCR4-NOT transcription complex subunit 9 (Bos taurus (Bovine)).